A 195-amino-acid polypeptide reads, in one-letter code: Imidazoleglycerol-phosphate dehydratase (195 aa).

Belongs to the imidazoleglycerol-phosphate dehydratase family.

It localises to the cytoplasm. The catalysed reaction is D-erythro-1-(imidazol-4-yl)glycerol 3-phosphate = 3-(imidazol-4-yl)-2-oxopropyl phosphate + H2O. The protein operates within amino-acid biosynthesis; L-histidine biosynthesis; L-histidine from 5-phospho-alpha-D-ribose 1-diphosphate: step 6/9. In Acetivibrio thermocellus (strain ATCC 27405 / DSM 1237 / JCM 9322 / NBRC 103400 / NCIMB 10682 / NRRL B-4536 / VPI 7372) (Clostridium thermocellum), this protein is Imidazoleglycerol-phosphate dehydratase.